We begin with the raw amino-acid sequence, 307 residues long: UPF0282 protein PH1002 (307 aa).

It belongs to the UPF0282 family.

This is UPF0282 protein PH1002 from Pyrococcus horikoshii (strain ATCC 700860 / DSM 12428 / JCM 9974 / NBRC 100139 / OT-3).